Consider the following 135-residue polypeptide: Hydroxylaminobenzene mutase HabA (135 aa).

4 helical membrane-spanning segments follow: residues Leu-5 to Val-25, Val-33 to Tyr-55, Phe-67 to Trp-87, and Phe-113 to Ile-133.

Its subcellular location is the cell membrane. It catalyses the reaction N-phenylhydroxylamine = 2-aminophenol. In terms of biological role, catalyzes the rearrangement of hydroxylaminobenzene to 2-aminophenol. Involved in the degradation of nitrobenzene. The sequence is that of Hydroxylaminobenzene mutase HabA (habA) from Ectopseudomonas oleovorans (Pseudomonas oleovorans).